The sequence spans 658 residues: Pentatricopeptide repeat-containing protein At1g69290 (658 aa).

Disordered stretches follow at residues 1 to 23 and 39 to 61; these read MFRK…ESPS and TLSP…KSSF. Residues 50–61 show a composition bias toward polar residues; it reads PKTLTPDQKSSF. 11 PPR repeats span residues 214–249, 250–284, 285–320, 323–353, 361–395, 397–431, 432–466, 467–497, 503–537, 538–568, and 581–615; these read DLVA…GVKP, DELS…GFAS, RRIL…GEES, SVET…AQKL, DSSV…GGGS, GIGV…GLQL, DVEI…RVVD, LKGS…VVED, NSHD…RYEP, NNQT…IKGK, and DHAL…KIFV.

Belongs to the PPR family. P subfamily.

This Arabidopsis thaliana (Mouse-ear cress) protein is Pentatricopeptide repeat-containing protein At1g69290.